The following is a 79-amino-acid chain: Sigma-O factor regulatory protein RsoA (79 aa).

Its function is as follows. Together with RNA polymerase sigma factor SigO, positively regulates the expression of at least three operons, including oxdC-yvrL, sigO-rsoA and yvrJ. Required for the acid stress-dependent induction of the oxalate decarboxylase oxdC. The chain is Sigma-O factor regulatory protein RsoA (rsoA) from Bacillus subtilis (strain 168).